The primary structure comprises 83 residues: CLAVATA3/ESR (CLE)-related protein 3 (83 aa).

Positions 1–24 (MASLKLWVCLVLLLVLELTSVHEC) are cleaved as a signal peptide. Residues 38-58 (RLKKIRRELFERLKEMKGRSE) adopt a coiled-coil conformation. A disordered region spans residues 53-83 (MKGRSEGEETILGNTLDSKRLSPGGPDPRHH). 2 positions are modified to hydroxyproline: Pro-75 and Pro-78. The O-linked (Ara...) hydroxyproline glycan is linked to Pro-78.

Belongs to the CLV3/ESR signal peptide family. Post-translationally, the O-glycosylation (arabinosylation) of the hydroxyproline Pro-78 enhances binding affinity of the CLE3p peptide for its receptor. Mostly expressed in roots, stems and apex, and, to a lower extent, in seedlings, leaves, flowers, siliques and pollen.

Its subcellular location is the secreted. It localises to the extracellular space. Extracellular signal peptide that regulates cell fate. This chain is CLAVATA3/ESR (CLE)-related protein 3, found in Arabidopsis thaliana (Mouse-ear cress).